Here is a 354-residue protein sequence, read N- to C-terminus: UDP-N-acetylglucosamine--N-acetylmuramyl-(pentapeptide) pyrophosphoryl-undecaprenol N-acetylglucosamine transferase (354 aa).

UDP-N-acetyl-alpha-D-glucosamine is bound by residues 11-13 (TAG), arginine 164, serine 194, and glutamine 289.

The protein belongs to the glycosyltransferase 28 family. MurG subfamily.

Its subcellular location is the cell membrane. It carries out the reaction di-trans,octa-cis-undecaprenyl diphospho-N-acetyl-alpha-D-muramoyl-L-alanyl-D-glutamyl-meso-2,6-diaminopimeloyl-D-alanyl-D-alanine + UDP-N-acetyl-alpha-D-glucosamine = di-trans,octa-cis-undecaprenyl diphospho-[N-acetyl-alpha-D-glucosaminyl-(1-&gt;4)]-N-acetyl-alpha-D-muramoyl-L-alanyl-D-glutamyl-meso-2,6-diaminopimeloyl-D-alanyl-D-alanine + UDP + H(+). Its pathway is cell wall biogenesis; peptidoglycan biosynthesis. In terms of biological role, cell wall formation. Catalyzes the transfer of a GlcNAc subunit on undecaprenyl-pyrophosphoryl-MurNAc-pentapeptide (lipid intermediate I) to form undecaprenyl-pyrophosphoryl-MurNAc-(pentapeptide)GlcNAc (lipid intermediate II). The protein is UDP-N-acetylglucosamine--N-acetylmuramyl-(pentapeptide) pyrophosphoryl-undecaprenol N-acetylglucosamine transferase of Lachnospira eligens (strain ATCC 27750 / DSM 3376 / VPI C15-48 / C15-B4) (Eubacterium eligens).